Reading from the N-terminus, the 810-residue chain is Interleukin-4 receptor subunit alpha (810 aa).

The signal sequence occupies residues 1 to 25; sequence MGRLCTKFLTSVGCLILLLVTGSGS. The Extracellular segment spans residues 26–233; the sequence is IKVLGEPTCF…NHFQLPLIQR (208 aa). A disulfide bridge connects residues cysteine 34 and cysteine 44. Asparagine 72 carries N-linked (GlcNAc...) asparagine glycosylation. The cysteines at positions 75 and 87 are disulfide-linked. The region spanning 126–224 is the Fibronectin type-III domain; that stretch reads APDNLTLHTN…EWSPSITWYN (99 aa). 3 N-linked (GlcNAc...) asparagine glycosylation sites follow: asparagine 129, asparagine 135, and asparagine 163. Serine 165 bears the Phosphoserine mark. The short motif at 213–217 is the WSXWS motif element; sequence WSEWS. The chain crosses the membrane as a helical span at residues 234–257; it reads LPLGVTISCLCIPLFCLFCYFSIT. Residues 258–810 are Cytoplasmic-facing; it reads KIKKIWWDQI…PVGALGIAVS (553 aa). Residues 263–271 carry the Box 1 motif motif; it reads WWDQIPTPA. Positions 441-557 are required for IRS1 activation and IL4-induced cell growth; the sequence is GSGQASVSWA…ESWEQILHMS (117 aa). Residues 460–482 are disordered; sequence ATCQVTEQPSHPGPLSGSPAQSA. The residue at position 500 (tyrosine 500) is a Phosphotyrosine. Residues 510 to 546 form a disordered region; that stretch reads APNPGELAPEQQQADHLEEEEPPSPADPHSSGPPMQP. The segment at 557-653 is required for IL4-induced gene expression; it reads SVLQHGAAAG…SSVPLFTFGL (97 aa). Residues tyrosine 575, tyrosine 603, and tyrosine 631 each carry the phosphotyrosine modification. The tract at residues 586–672 is disordered; it reads AAQDPGVPGV…NSDPPKSPPE (87 aa). Residues 635 to 647 show a composition bias toward low complexity; it reads QNPVPNQSPSSVP. Positions 707 to 712 match the ITIM motif motif; sequence IVYSSL. Residues 766–810 form a disordered region; the sequence is PPEANLMSAPKTPSNLSGEGKGPGHSPVPSQTTEVPVGALGIAVS.

This sequence belongs to the type I cytokine receptor family. Type 4 subfamily. As to quaternary structure, the functional IL4 receptor is formed by initial binding of IL4 to IL4R. Subsequent recruitment to the complex of the common gamma chain, in immune cells, creates a type I receptor and, in non-immune cells, of IL13RA1 forms a type II receptor. IL4R can also interact with the IL13/IL13RA1 complex to form a similar type II receptor. Interacts with the SH2-containing phosphatases, PTPN6/SHIP1, PTPN11/SHIP2 and INPP5D/SHIP. Interacts with JAK3. Interacts with PIK3C3. Interacts with JAK1 through a Box 1-containing region; inhibited by SOCS5. Interacts with SOCS5; inhibits IL4 signaling. Interacts with CLM1. Interacts with IL13RA2. In terms of processing, on IL4 binding, phosphorylated on C-terminal tyrosine residues. Soluble IL4R can also be produced by proteolytic cleavage at the cell surface (shedding). In terms of tissue distribution, expressed in both Th1 and Th2 cells.

It is found in the cell membrane. It localises to the secreted. Functionally, receptor for both interleukin 4 and interleukin 13. Couples to the JAK1/2/3-STAT6 pathway. The IL4 response is involved in promoting Th2 differentiation. The IL4/IL13 responses are involved in regulating IgE production and, chemokine and mucus production at sites of allergic inflammation. In certain cell types, can signal through activation of insulin receptor substrates, IRS1/IRS2. The polypeptide is Interleukin-4 receptor subunit alpha (Il4r) (Mus musculus (Mouse)).